A 590-amino-acid polypeptide reads, in one-letter code: Pescadillo homolog (590 aa).

In terms of domain architecture, BRCT spans 332–422; that stretch reads VCKSLFKDLK…IILPTEKYLV (91 aa). The disordered stretch occupies residues 561–590; sequence AMKISQSRKRSGVEIIEQRKKRLNDTQPSS.

Belongs to the pescadillo family. In terms of assembly, interacts with BOP1 and WDR12. Interacts with NSN1. As to expression, expressed in shoot and root apical meristems, epidermal cells and vasculature of developing leaves, trichome progenitor cells, young flowers, developing pollen grains and ovules, and mature pollen grains.

It localises to the nucleus. It is found in the nucleolus. Its subcellular location is the nucleoplasm. Required for maturation of ribosomal RNAs and formation of the large ribosomal subunit. Plays an essential role in cell growth and survival through its regulation of ribosome biogenesis and mitotic progression. Required for normal root cell growth and differentiation. In Arabidopsis thaliana (Mouse-ear cress), this protein is Pescadillo homolog.